The primary structure comprises 275 residues: 2'-N-acetylparomamine deacetylase (275 aa).

Zn(2+) contacts are provided by H14, D17, and H166.

This sequence belongs to the PIGL family. The cofactor is Zn(2+).

It carries out the reaction 2'-N-acetylparomamine + H2O = paromamine + acetate. It participates in antibiotic biosynthesis; butirosin biosynthesis. Its function is as follows. Deacetylase involved in the biosynthesis of butirosin by mediating deacetylation of 2'-N-acetylparomamine. The polypeptide is 2'-N-acetylparomamine deacetylase (btrD) (Niallia circulans (Bacillus circulans)).